The primary structure comprises 446 residues: Bifunctional protein GlmU (446 aa).

The pyrophosphorylase stretch occupies residues 1-226; it reads MLAVAILAAG…PDEVNGINDR (226 aa). UDP-N-acetyl-alpha-D-glucosamine contacts are provided by residues 7–10, Lys21, Gln73, and 78–79; these read LAAG and GT. Asp103 is a Mg(2+) binding site. UDP-N-acetyl-alpha-D-glucosamine-binding residues include Gly140, Glu155, Asn170, and Asn224. Asn224 lines the Mg(2+) pocket. The linker stretch occupies residues 227–247; the sequence is CQLANCEALLQERLRNYWMKE. The segment at 248–446 is N-acetyltransferase; the sequence is GVTFTDPASC…SKQLIKNGWQ (199 aa). Residues Arg329 and Lys347 each contribute to the UDP-N-acetyl-alpha-D-glucosamine site. The active-site Proton acceptor is the His359. The UDP-N-acetyl-alpha-D-glucosamine site is built by Tyr362 and Asn373. Acetyl-CoA is bound by residues Ala376, 382–383, Ala419, and Arg436; that span reads NY.

In the N-terminal section; belongs to the N-acetylglucosamine-1-phosphate uridyltransferase family. It in the C-terminal section; belongs to the transferase hexapeptide repeat family. Homotrimer. Requires Mg(2+) as cofactor.

The protein localises to the cytoplasm. It carries out the reaction alpha-D-glucosamine 1-phosphate + acetyl-CoA = N-acetyl-alpha-D-glucosamine 1-phosphate + CoA + H(+). The enzyme catalyses N-acetyl-alpha-D-glucosamine 1-phosphate + UTP + H(+) = UDP-N-acetyl-alpha-D-glucosamine + diphosphate. It participates in nucleotide-sugar biosynthesis; UDP-N-acetyl-alpha-D-glucosamine biosynthesis; N-acetyl-alpha-D-glucosamine 1-phosphate from alpha-D-glucosamine 6-phosphate (route II): step 2/2. It functions in the pathway nucleotide-sugar biosynthesis; UDP-N-acetyl-alpha-D-glucosamine biosynthesis; UDP-N-acetyl-alpha-D-glucosamine from N-acetyl-alpha-D-glucosamine 1-phosphate: step 1/1. The protein operates within bacterial outer membrane biogenesis; LPS lipid A biosynthesis. Functionally, catalyzes the last two sequential reactions in the de novo biosynthetic pathway for UDP-N-acetylglucosamine (UDP-GlcNAc). The C-terminal domain catalyzes the transfer of acetyl group from acetyl coenzyme A to glucosamine-1-phosphate (GlcN-1-P) to produce N-acetylglucosamine-1-phosphate (GlcNAc-1-P), which is converted into UDP-GlcNAc by the transfer of uridine 5-monophosphate (from uridine 5-triphosphate), a reaction catalyzed by the N-terminal domain. This Prochlorococcus marinus (strain MIT 9313) protein is Bifunctional protein GlmU.